We begin with the raw amino-acid sequence, 463 residues long: Asparagine--tRNA ligase (463 aa).

The protein belongs to the class-II aminoacyl-tRNA synthetase family. As to quaternary structure, homodimer.

Its subcellular location is the cytoplasm. The enzyme catalyses tRNA(Asn) + L-asparagine + ATP = L-asparaginyl-tRNA(Asn) + AMP + diphosphate + H(+). The chain is Asparagine--tRNA ligase from Nostoc sp. (strain PCC 7120 / SAG 25.82 / UTEX 2576).